Reading from the N-terminus, the 1090-residue chain is Nitrogen assimilation transcription factor nit-4 (1090 aa).

Polar residues predominate over residues 1 to 14 (MNSSDVQMMSSQDA). The disordered stretch occupies residues 1-43 (MNSSDVQMMSSQDAPGSAGLAPDNIASSLPSKKKSRRGADPTN). A DNA-binding region (zn(2)-C6 fungal-type) is located at residues 53–81 (CIACRRRKSKCDGALPSCAACASVYGTEC). Disordered stretches follow at residues 145 to 176 (RRDE…SQAV), 666 to 689 (FSTS…PAPP), 773 to 798 (HQHH…YQQQ), 825 to 875 (GIPT…VKPP), 936 to 999 (QGWD…QRQQ), and 1033 to 1053 (HGAE…TTVG). Residues 167-176 (GRDDATSQAV) show a composition bias toward basic and acidic residues. Residues 666–677 (FSTSEVPSPNRT) show a composition bias toward polar residues. Residues 849 to 859 (QPQQQQQPQAQ) show a composition bias toward low complexity. 2 stretches are compositionally biased toward gly residues: residues 940–965 (LEGG…GGAG) and 976–988 (NIGG…GGST). Residues 990-999 (QRQQQQQRQQ) are compositionally biased toward low complexity.

Its subcellular location is the nucleus. Pathway-specific regulatory gene of nitrate assimilation; it activates the transcription of the genes for nitrate and nitrite reductases. This Neurospora crassa (strain ATCC 24698 / 74-OR23-1A / CBS 708.71 / DSM 1257 / FGSC 987) protein is Nitrogen assimilation transcription factor nit-4 (nit-4).